The following is a 362-amino-acid chain: Flotillin-like protein FloA 2 (362 aa).

The chain crosses the membrane as a helical span at residues 24 to 44; it reads TALLIGALVIFAGIVVVLFIF.

The protein belongs to the flotillin-like FloA family. As to quaternary structure, homooligomerizes.

The protein resides in the cell membrane. It is found in the membrane raft. Functionally, found in functional membrane microdomains (FMM) that may be equivalent to eukaryotic membrane rafts. FMMs are highly dynamic and increase in number as cells age. Flotillins are thought to be important factors in membrane fluidity. The polypeptide is Flotillin-like protein FloA 2 (Rhodopirellula baltica (strain DSM 10527 / NCIMB 13988 / SH1)).